The sequence spans 476 residues: Cytochrome P450 6B5 (476 aa).

Residue Cys443 participates in heme binding.

This sequence belongs to the cytochrome P450 family. Heme serves as cofactor.

The protein resides in the endoplasmic reticulum membrane. It localises to the microsome membrane. It carries out the reaction an organic molecule + reduced [NADPH--hemoprotein reductase] + O2 = an alcohol + oxidized [NADPH--hemoprotein reductase] + H2O + H(+). Enables the insect to feed on furanocoumarin-producing plants and evolved as an adaptation for detoxification of xanthotoxin and other furanocoumarins. This is Cytochrome P450 6B5 (CYP6B5) from Papilio glaucus (Eastern tiger swallowtail butterfly).